The sequence spans 30 residues: Cycloviolacin-O9 (30 aa).

Residues 1 to 30 constitute a cross-link (cyclopeptide (Gly-Asn)); that stretch reads GIPCGESCVWIPCLTSAVGCSCKSKVCYRN. Cystine bridges form between C4–C20, C8–C22, and C13–C27.

Post-translationally, this is a cyclic peptide.

Probably participates in a plant defense mechanism. The protein is Cycloviolacin-O9 of Viola odorata (Sweet violet).